Reading from the N-terminus, the 212-residue chain is MSHNTSIASQGMPAMAGPETGGAGMTDNVYQSLLRNRIVFLGSEVKDENANALCAQMLLLNAEDPEADIYLYINSPGGSVTGGMAIYDTMQWISNDVATVTMGMAASMGQFLLTAGTPGKRYALPHAKILMHQPLGGVGGTATEIAINAKMLKDTKRELSQLNADHSGHTLEQILEDSDRDHWFTAQEALEYGLIDHVYSNASQLRGDAPNQ.

Positions 1–20 (MSHNTSIASQGMPAMAGPET) are disordered. The Nucleophile role is filled by Ser-107. The active site involves His-132.

This sequence belongs to the peptidase S14 family. As to quaternary structure, fourteen ClpP subunits assemble into 2 heptameric rings which stack back to back to give a disk-like structure with a central cavity, resembling the structure of eukaryotic proteasomes.

It is found in the cytoplasm. It catalyses the reaction Hydrolysis of proteins to small peptides in the presence of ATP and magnesium. alpha-casein is the usual test substrate. In the absence of ATP, only oligopeptides shorter than five residues are hydrolyzed (such as succinyl-Leu-Tyr-|-NHMec, and Leu-Tyr-Leu-|-Tyr-Trp, in which cleavage of the -Tyr-|-Leu- and -Tyr-|-Trp bonds also occurs).. Cleaves peptides in various proteins in a process that requires ATP hydrolysis. Has a chymotrypsin-like activity. Plays a major role in the degradation of misfolded proteins. This chain is ATP-dependent Clp protease proteolytic subunit 2, found in Cutibacterium acnes (strain DSM 16379 / KPA171202) (Propionibacterium acnes).